The primary structure comprises 259 residues: Ribonuclease PH (259 aa).

Phosphate-binding positions include Arg-88 and 126 to 128; that span reads GTR.

This sequence belongs to the RNase PH family. As to quaternary structure, homohexameric ring arranged as a trimer of dimers.

It carries out the reaction tRNA(n+1) + phosphate = tRNA(n) + a ribonucleoside 5'-diphosphate. Functionally, phosphorolytic 3'-5' exoribonuclease that plays an important role in tRNA 3'-end maturation. Removes nucleotide residues following the 3'-CCA terminus of tRNAs; can also add nucleotides to the ends of RNA molecules by using nucleoside diphosphates as substrates, but this may not be physiologically important. Probably plays a role in initiation of 16S rRNA degradation (leading to ribosome degradation) during starvation. This Mycobacterium bovis (strain BCG / Pasteur 1173P2) protein is Ribonuclease PH.